We begin with the raw amino-acid sequence, 102 residues long: Small ribosomal subunit protein uS10 (102 aa).

It belongs to the universal ribosomal protein uS10 family. In terms of assembly, part of the 30S ribosomal subunit.

Functionally, involved in the binding of tRNA to the ribosomes. This chain is Small ribosomal subunit protein uS10, found in Sulfolobus acidocaldarius (strain ATCC 33909 / DSM 639 / JCM 8929 / NBRC 15157 / NCIMB 11770).